Reading from the N-terminus, the 284-residue chain is Zinc finger protein ZAT3 (284 aa).

Residues 1–12 (MNNNHSYDDRSF) are compositionally biased toward basic and acidic residues. A disordered region spans residues 1–76 (MNNNHSYDDR…KPDPNAPKIT (76 aa)). Positions 18–37 (PSNTSNPNPNLQFALSSSYD) are enriched in polar residues. A compositionally biased stretch (low complexity) spans 47 to 62 (TVASSSSSSPKSASKP). 3 consecutive C2H2-type zinc fingers follow at residues 77-99 (RPCT…MRCH), 162-184 (FECG…RASH), and 222-244 (HKCN…MRCH).

Interacts (via the EAR motif) with TPL. In terms of tissue distribution, expressed exclusively in pollen.

The protein resides in the nucleus. In terms of biological role, mediates the regulation of male germ cell division by DUO1. The chain is Zinc finger protein ZAT3 from Arabidopsis thaliana (Mouse-ear cress).